A 416-amino-acid chain; its full sequence is Tryptophan synthase beta chain (416 aa).

Lys109 is modified (N6-(pyridoxal phosphate)lysine).

It belongs to the TrpB family. As to quaternary structure, tetramer of two alpha and two beta chains. Pyridoxal 5'-phosphate serves as cofactor.

It catalyses the reaction (1S,2R)-1-C-(indol-3-yl)glycerol 3-phosphate + L-serine = D-glyceraldehyde 3-phosphate + L-tryptophan + H2O. The protein operates within amino-acid biosynthesis; L-tryptophan biosynthesis; L-tryptophan from chorismate: step 5/5. Functionally, the beta subunit is responsible for the synthesis of L-tryptophan from indole and L-serine. This chain is Tryptophan synthase beta chain, found in Mesorhizobium japonicum (strain LMG 29417 / CECT 9101 / MAFF 303099) (Mesorhizobium loti (strain MAFF 303099)).